A 621-amino-acid chain; its full sequence is Chaperone protein HtpG (621 aa).

An a; substrate-binding region spans residues 1–328; sequence MKQEKKKFDA…SEDLPLNISR (328 aa). A b region spans residues 329-544; that stretch reads ESLQHNNVLE…EAAMDIRMER (216 aa). The segment at 478–498 is disordered; it reads DVDQATSSSEEKNKDDKKSDD. Residues 486 to 498 are compositionally biased toward basic and acidic residues; it reads SEEKNKDDKKSDD. The c stretch occupies residues 545–621; that stretch reads FLIEQKQIAN…LNDIVQKAIL (77 aa).

It belongs to the heat shock protein 90 family. As to quaternary structure, homodimer.

Its subcellular location is the cytoplasm. In terms of biological role, molecular chaperone. Has ATPase activity. The chain is Chaperone protein HtpG from Rickettsia bellii (strain RML369-C).